We begin with the raw amino-acid sequence, 125 residues long: Small ribosomal subunit protein uS11 (125 aa).

Residues 101 to 125 (KDVKDVTPTPHNGTRPPKKILKREK) form a disordered region. The segment covering 116–125 (PPKKILKREK) has biased composition (basic residues).

The protein belongs to the universal ribosomal protein uS11 family. As to quaternary structure, part of the 30S ribosomal subunit. Interacts with proteins S7 and S18. Binds to IF-3.

Its function is as follows. Located on the platform of the 30S subunit, it bridges several disparate RNA helices of the 16S rRNA. Forms part of the Shine-Dalgarno cleft in the 70S ribosome. The chain is Small ribosomal subunit protein uS11 from Mycoplasma sp.